Reading from the N-terminus, the 1347-residue chain is Spermatogenesis-associated protein 31A3 (1347 aa).

Residues 23-43 (PWVLDIFLTLVFALGFFFLLL) traverse the membrane as a helical segment. 8 disordered regions span residues 55–87 (PSPSPGKRKCPVGRRRRPRGRMKNHSLRAGREC), 108–142 (HLDKGDFGQLSGPDPPGEVGERAPDGASQSSHEPM), 154–235 (SPDP…STLI), 373–397 (EQDTTNPKPFWNMGENSKQLPGPQK), 627–658 (QDESPGTSQAKGKPSPWQSSMSTGESSKEAQK), 900–955 (RGIP…REAV), 1084–1161 (VHEE…PSVS), and 1313–1335 (KAVSPVSPPQHWPKTSGASSHHH). A compositionally biased stretch (basic residues) spans 60-82 (GKRKCPVGRRRRPRGRMKNHSLR). Residues 165-178 (LASTPSPGPMTTSV) are compositionally biased toward polar residues. Residues 198–211 (PEPPALFPHPPHTP) are compositionally biased toward pro residues. Composition is skewed to polar residues over residues 627-651 (QDESPGTSQAKGKPSPWQSSMSTGE) and 927-948 (LTYSLTGSTQQSRSLGAQSSKA). Basic and acidic residues-rich tracts occupy residues 1108-1127 (HKSEKFRKPNLEKHEERLEG) and 1137-1146 (RKTEDTHQDE).

Belongs to the SPATA31 family.

Its subcellular location is the membrane. In terms of biological role, may play a role in spermatogenesis. In Homo sapiens (Human), this protein is Spermatogenesis-associated protein 31A3 (SPATA31A3).